The sequence spans 665 residues: Intraflagellar transport protein 70B (665 aa).

TPR repeat units follow at residues 11–44 (DGEFTAVVYRLIRNARYAEAVQLLGGELQRSPRS), 45–78 (RAGLSLLGYCYYRLQEFALAAECYEQLGQLHPEL), 154–187 (TDGQINLGCLLYKEGQYEAACSKFFAALQASGYQ), 189–221 (DLSYNLALAYYSSRQYASALKHIAEIIERGIRQ), 393–424 (LTIQVQEARHNRDDEAIKKAVNEYDETMEKYI), 425–457 (PVLMAQAKIYWNLENYPMVEKIFRKSVEFCNDH), and 459–492 (VWKLNVAHVLFMQENKYKEAIGFYEPIVKKHYDN). The disordered stretch occupies residues 130–154 (PGSRSLVEQLPSREGGEESGGENET). Residues 508-535 (YIMTSQNEEAEELMRKIEKEEEQLSYDD) are a coiled coil. The TPR 8 repeat unit spans residues 544–577 (CIVNLVIGTLYCAKGNYDFGISRVIKSLEPYNKK).

Belongs to the TTC30/dfy-1/fleer family. In terms of assembly, interacts with the IFT B complex components IFT27, IFT46, IFT74, IFT52, IFT57, IFT80, IFT81 and IFT88. Interacts with KIF17.

The protein resides in the cell projection. It localises to the cilium. Required for polyglutamylation of axonemal tubulin. Plays a role in anterograde intraflagellar transport (IFT), the process by which cilia precursors are transported from the base of the cilium to the site of their incorporation at the tip. The polypeptide is Intraflagellar transport protein 70B (Homo sapiens (Human)).